Reading from the N-terminus, the 29-residue chain is Cytolysin Uc-1 (29 aa).

Over residues 1–15 (DEQTGSKGPNENLPS) the composition is skewed to polar residues. Residues 1–29 (DEQTGSKGPNENLPSQKDLXAKASXLTEV) are disordered.

The protein resides in the secreted. It localises to the nematocyst. The protein localises to the target cell membrane. In terms of biological role, pore-forming toxin that lyses bovine erythrocytes at nanomolar concentrations. Is devoid of enzymatic activity. Binds to monolayers and efficiently permeabilizes small lipid vesicles composed of sphingomyelin and cholesterol. The cytolytic activity is not prevented by cholesterol or sphingomyelin. This Urticina crassicornis (Mottled anemone) protein is Cytolysin Uc-1.